Reading from the N-terminus, the 519-residue chain is O-fucosyltransferase 31 (519 aa).

A helical; Signal-anchor for type II membrane protein transmembrane segment spans residues 18–38 (ALAGVFVLLFPILYPNLFSPL). Asparagine 131 carries an N-linked (GlcNAc...) asparagine glycan. Position 302–304 (302–304 (HLR)) interacts with substrate. N-linked (GlcNAc...) asparagine glycosylation is found at asparagine 373 and asparagine 474.

It belongs to the glycosyltransferase GT106 family.

Its subcellular location is the membrane. Its pathway is glycan metabolism. In Arabidopsis thaliana (Mouse-ear cress), this protein is O-fucosyltransferase 31.